The following is a 128-amino-acid chain: Large ribosomal subunit protein uL22 (128 aa).

The protein belongs to the universal ribosomal protein uL22 family. In terms of assembly, part of the 50S ribosomal subunit.

This protein binds specifically to 23S rRNA; its binding is stimulated by other ribosomal proteins, e.g. L4, L17, and L20. It is important during the early stages of 50S assembly. It makes multiple contacts with different domains of the 23S rRNA in the assembled 50S subunit and ribosome. Its function is as follows. The globular domain of the protein is located near the polypeptide exit tunnel on the outside of the subunit, while an extended beta-hairpin is found that lines the wall of the exit tunnel in the center of the 70S ribosome. This chain is Large ribosomal subunit protein uL22, found in Methylobacterium radiotolerans (strain ATCC 27329 / DSM 1819 / JCM 2831 / NBRC 15690 / NCIMB 10815 / 0-1).